A 609-amino-acid chain; its full sequence is UvrABC system protein C (609 aa).

The GIY-YIG domain maps to 15–92; that stretch reads TGSGVYQMQD…IKQFRPRYNV (78 aa). The 36-residue stretch at 202-237 folds into the UVR domain; it reads DQVIIKLTERMEVASENLVFEEAAHYRDQIRQLRRL.

It belongs to the UvrC family. In terms of assembly, interacts with UvrB in an incision complex.

Its subcellular location is the cytoplasm. The UvrABC repair system catalyzes the recognition and processing of DNA lesions. UvrC both incises the 5' and 3' sides of the lesion. The N-terminal half is responsible for the 3' incision and the C-terminal half is responsible for the 5' incision. The sequence is that of UvrABC system protein C from Coxiella burnetii (strain CbuG_Q212) (Coxiella burnetii (strain Q212)).